Here is a 502-residue protein sequence, read N- to C-terminus: 1-aminocyclopropane-1-carboxylate synthase-like protein 1 (502 aa).

The segment at 15–35 (CPGSDSIQDLPSNKGDGLERE) is disordered. Substrate is bound at residue E106. K324 carries the N6-(pyridoxal phosphate)lysine modification.

It belongs to the class-I pyridoxal-phosphate-dependent aminotransferase family.

Functionally, does not catalyze the synthesis of 1-aminocyclopropane-1-carboxylate but is capable of catalyzing the deamination of L-vinylglycine. The chain is 1-aminocyclopropane-1-carboxylate synthase-like protein 1 (ACCS) from Bos taurus (Bovine).